We begin with the raw amino-acid sequence, 405 residues long: MADVNKVVLAYSGGLDTSVILKWLQDTYNCEVVTFTADLGQGEEVEPARAKAQAMGVKEIYIDDLREEFVRDFVFPMFRANTVYEGEYLLGTSIARPLIAKRLIEIANETGADAISHGATGKGNDQVRFELGAYALKPGVKVIAPWREWDLLSREKLMDYAEKHNIPIERHGKKKSPYSMDANLLHISYEGGVLEDTWTEHEEDMWRWTKSPEDAPNVATYLELTYRNGDIVALDGVEMTPATVLATLNRIGGENGIGRLDIVENRYVGMKSRGCYETPGGTIMLRAHRAIESITLDREVAHLKDELMAKYASLIYTGYWWSPERLMLQQMIDASQAHVNGVVRLKLYKGNVIVTGRKSDDSLFDANIATFEDDAGAYDQADAAGFIKLNALRMRIAANKGRKLF.

Residues 10-18 (AYSGGLDTS) and A37 contribute to the ATP site. L-citrulline contacts are provided by Y88 and S93. An ATP-binding site is contributed by G118. L-aspartate-binding residues include T120, N124, and D125. Residue N124 coordinates L-citrulline. L-citrulline-binding residues include R128, S179, S188, E264, and Y276.

Belongs to the argininosuccinate synthase family. Type 1 subfamily. In terms of assembly, homotetramer.

It localises to the cytoplasm. It catalyses the reaction L-citrulline + L-aspartate + ATP = 2-(N(omega)-L-arginino)succinate + AMP + diphosphate + H(+). It participates in amino-acid biosynthesis; L-arginine biosynthesis; L-arginine from L-ornithine and carbamoyl phosphate: step 2/3. This is Argininosuccinate synthase from Pseudomonas savastanoi pv. phaseolicola (strain 1448A / Race 6) (Pseudomonas syringae pv. phaseolicola (strain 1448A / Race 6)).